Here is a 393-residue protein sequence, read N- to C-terminus: Glutamyl-tRNA reductase (393 aa).

Residues 47–50, serine 98, 103–105, and glutamine 109 each bind substrate; these read TCSR and ETD. Residue cysteine 48 is the Nucleophile of the active site. Residue 177-182 participates in NADP(+) binding; sequence GAGAVG.

The protein belongs to the glutamyl-tRNA reductase family. As to quaternary structure, homodimer.

It carries out the reaction (S)-4-amino-5-oxopentanoate + tRNA(Glu) + NADP(+) = L-glutamyl-tRNA(Glu) + NADPH + H(+). It participates in porphyrin-containing compound metabolism; protoporphyrin-IX biosynthesis; 5-aminolevulinate from L-glutamyl-tRNA(Glu): step 1/2. Its function is as follows. Catalyzes the NADPH-dependent reduction of glutamyl-tRNA(Glu) to glutamate 1-semialdehyde (GSA). This is Glutamyl-tRNA reductase from Pyrobaculum neutrophilum (strain DSM 2338 / JCM 9278 / NBRC 100436 / V24Sta) (Thermoproteus neutrophilus).